A 231-amino-acid polypeptide reads, in one-letter code: Ureidoacrylate amidohydrolase RutB (231 aa).

The Proton acceptor role is filled by aspartate 25. Lysine 134 is an active-site residue. Cysteine 167 acts as the Nucleophile in catalysis.

This sequence belongs to the isochorismatase family. RutB subfamily.

It carries out the reaction (Z)-3-ureidoacrylate + H2O + H(+) = (Z)-3-aminoacrylate + NH4(+) + CO2. It catalyses the reaction (Z)-3-ureidoacrylate + H2O = (Z)-3-aminoacrylate + carbamate + H(+). The catalysed reaction is (Z)-2-methylureidoacrylate + H2O + H(+) = (Z)-2-methylaminoacrylate + NH4(+) + CO2. Functionally, hydrolyzes ureidoacrylate to form aminoacrylate and carbamate. The carbamate hydrolyzes spontaneously, thereby releasing one of the nitrogen atoms of the pyrimidine ring as ammonia and one of its carbon atoms as CO2. The chain is Ureidoacrylate amidohydrolase RutB from Escherichia coli O18:K1:H7 (strain IHE3034 / ExPEC).